A 199-amino-acid polypeptide reads, in one-letter code: Potassium-transporting ATPase KdpC subunit 2 (199 aa).

Residues 13-33 traverse the membrane as a helical segment; it reads ITLIFWLVTAIIYPLAILVVG.

The protein belongs to the KdpC family. In terms of assembly, the system is composed of three essential subunits: KdpA, KdpB and KdpC.

It is found in the cell inner membrane. Its function is as follows. Part of the high-affinity ATP-driven potassium transport (or Kdp) system, which catalyzes the hydrolysis of ATP coupled with the electrogenic transport of potassium into the cytoplasm. This subunit acts as a catalytic chaperone that increases the ATP-binding affinity of the ATP-hydrolyzing subunit KdpB by the formation of a transient KdpB/KdpC/ATP ternary complex. In Nostoc sp. (strain PCC 7120 / SAG 25.82 / UTEX 2576), this protein is Potassium-transporting ATPase KdpC subunit 2.